We begin with the raw amino-acid sequence, 523 residues long: Anthranilate synthase component 1 (523 aa).

Residues Ser45 and 296-298 (PYM) contribute to the L-tryptophan site. 333-334 (GT) provides a ligand contact to chorismate. Glu366 contacts Mg(2+). Residues Tyr454, Arg474, 488–490 (GAG), and Gly490 each bind chorismate. Glu503 is a Mg(2+) binding site.

The protein belongs to the anthranilate synthase component I family. Heterotetramer consisting of two non-identical subunits: a beta subunit (TrpG) and a large alpha subunit (TrpE). Mg(2+) is required as a cofactor.

It catalyses the reaction chorismate + L-glutamine = anthranilate + pyruvate + L-glutamate + H(+). It functions in the pathway amino-acid biosynthesis; L-tryptophan biosynthesis; L-tryptophan from chorismate: step 1/5. Its activity is regulated as follows. Feedback inhibited by tryptophan. Part of a heterotetrameric complex that catalyzes the two-step biosynthesis of anthranilate, an intermediate in the biosynthesis of L-tryptophan. In the first step, the glutamine-binding beta subunit (TrpG) of anthranilate synthase (AS) provides the glutamine amidotransferase activity which generates ammonia as a substrate that, along with chorismate, is used in the second step, catalyzed by the large alpha subunit of AS (TrpE) to produce anthranilate. In the absence of TrpG, TrpE can synthesize anthranilate directly from chorismate and high concentrations of ammonia. This is Anthranilate synthase component 1 (trpE) from Vibrio cholerae serotype O1 (strain ATCC 39315 / El Tor Inaba N16961).